Here is a 198-residue protein sequence, read N- to C-terminus: uncharacterized protein (198 aa).

This sequence to A.aeolicus aq_1211 and aq_1583.

This is an uncharacterized protein from Aquifex aeolicus (strain VF5).